Reading from the N-terminus, the 775-residue chain is 5-methyltetrahydropteroyltriglutamate--homocysteine methyltransferase (775 aa).

Residues 16–19 (REMK) and lysine 115 each bind 5-methyltetrahydropteroyltri-L-glutamate. L-homocysteine contacts are provided by residues 435–437 (IGS) and glutamate 488. L-methionine is bound by residues 435–437 (IGS) and glutamate 488. 5-methyltetrahydropteroyltri-L-glutamate contacts are provided by residues 519–520 (RC) and tryptophan 565. Aspartate 603 contacts L-homocysteine. Aspartate 603 is a binding site for L-methionine. Glutamate 609 is a binding site for 5-methyltetrahydropteroyltri-L-glutamate. The Zn(2+) site is built by histidine 645, cysteine 647, and glutamate 669. Histidine 698 serves as the catalytic Proton donor. Cysteine 730 serves as a coordination point for Zn(2+).

The protein belongs to the vitamin-B12 independent methionine synthase family. The cofactor is Zn(2+).

The catalysed reaction is 5-methyltetrahydropteroyltri-L-glutamate + L-homocysteine = tetrahydropteroyltri-L-glutamate + L-methionine. It participates in amino-acid biosynthesis; L-methionine biosynthesis via de novo pathway; L-methionine from L-homocysteine (MetE route): step 1/1. In terms of biological role, catalyzes the transfer of a methyl group from 5-methyltetrahydrofolate to homocysteine resulting in methionine formation. The chain is 5-methyltetrahydropteroyltriglutamate--homocysteine methyltransferase from Coxiella burnetii (strain CbuG_Q212) (Coxiella burnetii (strain Q212)).